A 288-amino-acid polypeptide reads, in one-letter code: ATP synthase gamma chain (288 aa).

Belongs to the ATPase gamma chain family. In terms of assembly, F-type ATPases have 2 components, CF(1) - the catalytic core - and CF(0) - the membrane proton channel. CF(1) has five subunits: alpha(3), beta(3), gamma(1), delta(1), epsilon(1). CF(0) has three main subunits: a, b and c.

The protein resides in the cell inner membrane. Its function is as follows. Produces ATP from ADP in the presence of a proton gradient across the membrane. The gamma chain is believed to be important in regulating ATPase activity and the flow of protons through the CF(0) complex. The protein is ATP synthase gamma chain of Rickettsia akari (strain Hartford).